The chain runs to 435 residues: Serine--tRNA ligase (435 aa).

Threonine 239–glutamate 241 provides a ligand contact to L-serine. ATP is bound at residue arginine 270 to glutamate 272. Glutamate 293 lines the L-serine pocket. Glutamate 357–serine 360 serves as a coordination point for ATP. Serine 393 serves as a coordination point for L-serine.

This sequence belongs to the class-II aminoacyl-tRNA synthetase family. Type-1 seryl-tRNA synthetase subfamily. In terms of assembly, homodimer. The tRNA molecule binds across the dimer.

The protein resides in the cytoplasm. It catalyses the reaction tRNA(Ser) + L-serine + ATP = L-seryl-tRNA(Ser) + AMP + diphosphate + H(+). The enzyme catalyses tRNA(Sec) + L-serine + ATP = L-seryl-tRNA(Sec) + AMP + diphosphate + H(+). It functions in the pathway aminoacyl-tRNA biosynthesis; selenocysteinyl-tRNA(Sec) biosynthesis; L-seryl-tRNA(Sec) from L-serine and tRNA(Sec): step 1/1. Functionally, catalyzes the attachment of serine to tRNA(Ser). Is also able to aminoacylate tRNA(Sec) with serine, to form the misacylated tRNA L-seryl-tRNA(Sec), which will be further converted into selenocysteinyl-tRNA(Sec). This Parvibaculum lavamentivorans (strain DS-1 / DSM 13023 / NCIMB 13966) protein is Serine--tRNA ligase.